The primary structure comprises 1198 residues: Structural polyprotein (1198 aa).

Residues threonine 2–asparagine 15 form an interaction with host EXOC1 region. The hydrophobic; homodimerization of capsid protein C stretch occupies residues leucine 37–valine 72. The propeptide at glycine 106 to alanine 127 is ER anchor for the capsid protein C, removed in mature form by serine protease NS3. Residues serine 110–leucine 130 traverse the membrane as a helical segment. Asparagine 142 carries N-linked (GlcNAc...) asparagine; by host glycosylation. The next 2 helical transmembrane spans lie at tryptophan 254–serine 274 and valine 280–serine 294. Intrachain disulfides connect cysteine 297–cysteine 324, cysteine 354–cysteine 410, cysteine 354–cysteine 415, cysteine 368–cysteine 399, cysteine 386–cysteine 410, and cysteine 386–cysteine 415. The interval aspartate 392 to glycine 405 is fusion peptide. N-linked (GlcNAc...) asparagine; by host glycosylation is present at asparagine 448. 2 disulfide bridges follow: cysteine 484-cysteine 581 and cysteine 598-cysteine 629. 2 helical membrane-spanning segments follow: residues phenylalanine 747–valine 767 and isoleucine 774–alanine 794. 6 disulfide bridges follow: cysteine 798-cysteine 809, cysteine 849-cysteine 937, cysteine 973-cysteine 1017, cysteine 1074-cysteine 1123, cysteine 1085-cysteine 1106, and cysteine 1107-cysteine 1110. Asparagine 924 and asparagine 1001 each carry an N-linked (GlcNAc...) asparagine; by host glycan. Positions methionine 1151–isoleucine 1178 are disordered.

As to quaternary structure, homodimer. Interacts (via N-terminus) with host EXOC1 (via C-terminus); this interaction results in EXOC1 degradation through the proteasome degradation pathway. Interacts with host CAPRIN1; this interaction is involved in the suppression of the integrated stress response. In terms of assembly, forms heterodimers with envelope protein E in the endoplasmic reticulum and Golgi. Homodimer; in the endoplasmic reticulum and Golgi. Interacts with protein prM. Interacts with non-structural protein 1. Post-translationally, genome polyprotein: Specific enzymatic cleavages in vivo yield mature proteins. Cleavages in the lumen of endoplasmic reticulum are performed by host signal peptidase, whereas cleavages in the cytoplasmic side are performed by serine protease NS3. Signal cleavage at the 2K-4B site requires a prior NS3 protease-mediated cleavage at the 4A-2K site. Cleaved in post-Golgi vesicles by a host furin, releasing the mature small envelope protein M, and peptide pr. This cleavage is incomplete as up to 30% of viral particles still carry uncleaved prM. In terms of processing, N-glycosylated.

It localises to the secreted. Its subcellular location is the virion membrane. The protein resides in the host endoplasmic reticulum membrane. Its function is as follows. Plays a role in virus budding by binding to the cell membrane and gathering the viral RNA into a nucleocapsid that forms the core of a mature virus particle. During virus entry, may induce genome penetration into the host cytoplasm after hemifusion induced by the surface proteins. Can migrate to the cell nucleus where it modulates host functions. Overcomes the anti-viral effects of host EXOC1 by sequestering and degrading the latter through the proteasome degradation pathway. Inhibits the integrated stress response (ISR) in the infected cell by binding to host CAPRIN1. Inhibits RNA silencing by interfering with host Dicer. Functionally, prevents premature fusion activity of envelope proteins in trans-Golgi by binding to envelope protein E at pH6.0. After virion release in extracellular space, gets dissociated from E dimers. In terms of biological role, acts as a chaperone for envelope protein E during intracellular virion assembly by masking and inactivating envelope protein E fusion peptide. prM is the only viral peptide matured by host furin in the trans-Golgi network probably to avoid catastrophic activation of the viral fusion activity in acidic Golgi compartment prior to virion release. prM-E cleavage is inefficient, and many virions are only partially matured. These uncleaved prM would play a role in immune evasion. Its function is as follows. May play a role in virus budding. Exerts cytotoxic effects by activating a mitochondrial apoptotic pathway through M ectodomain. May display a viroporin activity. Binds to host cell surface receptor and mediates fusion between viral and cellular membranes. Envelope protein is synthesized in the endoplasmic reticulum in the form of heterodimer with protein prM. They play a role in virion budding in the ER, and the newly formed immature particle is covered with 60 spikes composed of heterodimer between precursor prM and envelope protein E. The virion is transported to the Golgi apparatus where the low pH causes dissociation of PrM-E heterodimers and formation of E homodimers. prM-E cleavage is inefficient, and many virions are only partially matured. These uncleaved prM would play a role in immune evasion. This Ardeidae (herons) protein is Structural polyprotein.